A 220-amino-acid chain; its full sequence is Tumor protein p53-inducible nuclear protein 2 (220 aa).

The segment covering 1-12 (MFQRLSSLFFST) has biased composition (low complexity). Disordered regions lie at residues 1 to 24 (MFQR…CPRA), 41 to 69 (PDSY…LMDE), and 119 to 220 (PGSP…QFNY). A Phosphoserine modification is found at Ser14. An LIR motif is present at residues 26 to 41 (VSEEDEVDGWLIIDLP). Pro residues predominate over residues 47 to 64 (PPSPGAAPAPAGRPPPAP). The residue at position 136 (Ser136) is a Phosphoserine. Positions 152 to 170 (HAAPLPARAALLEKAGQVR) are enriched in low complexity. The span at 205-220 (NQSSFIYQPCQRQFNY) shows a compositional bias: polar residues.

As to quaternary structure, interacts with VMP1, GABARAP, GABARAPL1, GABARAPL2, MAP1LC3A, MAP1LC3B, MAP1LC3C and THRA.

It is found in the cytoplasm. Its subcellular location is the cytosol. The protein localises to the nucleus. It localises to the PML body. The protein resides in the cytoplasmic vesicle. It is found in the autophagosome. Functionally, dual regulator of transcription and autophagy. Positively regulates autophagy and is required for autophagosome formation and processing. May act as a scaffold protein that recruits MAP1LC3A, GABARAP and GABARAPL2 and brings them to the autophagosome membrane by interacting with VMP1 where, in cooperation with the BECN1-PI3-kinase class III complex, they trigger autophagosome development. Acts as a transcriptional activator of THRA. The sequence is that of Tumor protein p53-inducible nuclear protein 2 (TP53INP2) from Homo sapiens (Human).